The chain runs to 718 residues: Exostosin-2 (718 aa).

Residues 1-25 (MCASVKYNIRGPALIPRMKTKHRIY) lie on the Cytoplasmic side of the membrane. The chain crosses the membrane as a helical; Signal-anchor for type II membrane protein span at residues 26–46 (YITLFSIVLLGLIATGMFQFW). The Lumenal portion of the chain corresponds to 47–718 (PHSIESSNDW…LKSFPNIGSL (672 aa)). 4 disulfides stabilise this stretch: Cys85–Cys90, Cys96–Cys151, Cys286–Cys300, and Cys318–Cys339. Asn288 is a glycosylation site (N-linked (GlcNAc...) asparagine). 4 residues coordinate UDP: Leu461, Arg465, Asn490, and Asn517. UDP-N-acetyl-alpha-D-glucosamine-binding residues include Arg465, Asn490, Asn517, Arg522, Asp538, Asp539, and Asp540. UDP-binding residues include Asp538 and Asp539. Residue Asp540 participates in Mn(2+) binding. Positions 582 and 584 each coordinate a protein. Cys626 and Cys676 form a disulfide bridge. Residues Glu627 and Asp628 each contribute to the UDP-N-acetyl-alpha-D-glucosamine site. N-linked (GlcNAc...) asparagine glycosylation occurs at Asn637. A protein contacts are provided by Lys651 and Lys653. Residue Arg673 coordinates UDP-N-acetyl-alpha-D-glucosamine.

The protein belongs to the glycosyltransferase 47 family. As to quaternary structure, part of the heparan sulfate polymerase, a dimeric complex composed of EXT1 and EXT2. Could also form homooligomeric complexes. Interacts with NDST1. Interacts with GALNT5. Requires Mn(2+) as cofactor. N-glycosylated at Asn-637. Post-translationally, a soluble form is generated by proteolytic processing. As to expression, widely expressed.

Its subcellular location is the golgi apparatus membrane. The protein localises to the golgi apparatus. The protein resides in the cis-Golgi network membrane. It localises to the endoplasmic reticulum membrane. It is found in the secreted. The catalysed reaction is 3-O-{[(1-&gt;4)-beta-D-GlcA-(1-&gt;4)-alpha-D-GlcNAc](n)-(1-&gt;4)-beta-D-GlcA-(1-&gt;3)-beta-D-Gal-(1-&gt;3)-beta-D-Gal-(1-&gt;4)-beta-D-Xyl}-L-seryl-[protein] + UDP-N-acetyl-alpha-D-glucosamine = 3-O-{alpha-D-GlcNAc-[(1-&gt;4)-beta-D-GlcA-(1-&gt;4)-alpha-D-GlcNAc](n)-(1-&gt;4)-beta-D-GlcA-(1-&gt;3)-beta-D-Gal-(1-&gt;3)-beta-D-Gal-(1-&gt;4)-beta-D-Xyl}-L-seryl-[protein] + UDP + H(+). Its pathway is protein modification; protein glycosylation. In terms of biological role, glycosyltransferase forming with EXT1 the heterodimeric heparan sulfate polymerase which catalyzes the elongation of the heparan sulfate glycan backbone. Glycan backbone extension consists in the alternating transfer of (1-&gt;4)-beta-D-GlcA and (1-&gt;4)-alpha-D-GlcNAc residues from their respective UDP-sugar donors. Both EXT1 and EXT2 are required for the full activity of the polymerase since EXT1 bears the N-acetylglucosaminyl-proteoglycan 4-beta-glucuronosyltransferase activity within the complex while EXT2 carries the glucuronosyl-N-acetylglucosaminyl-proteoglycan 4-alpha-N-acetylglucosaminyltransferase activity. Heparan sulfate proteoglycans are ubiquitous components of the extracellular matrix and play an important role in tissue homeostasis and signaling. The chain is Exostosin-2 from Homo sapiens (Human).